The chain runs to 395 residues: Type III polyketide synthase A (395 aa).

63–70 (KLEHLCKT) is a CoA binding site. C172 (nucleophile) is an active-site residue. 224-225 (GD) contacts substrate. Residues L274, 314 to 317 (GGPA), and A317 each bind CoA.

Belongs to the thiolase-like superfamily. Chalcone/stilbene synthases family. As to quaternary structure, homodimer. Interacts with 4CLL1/ACOS5 and TKPR1. In terms of tissue distribution, expressed in flowers and flower buds (at protein level), and, at very low levels, in roots, seedlings, leaves and stems. Mostly confined to anther tapetal cells.

It localises to the endoplasmic reticulum. The protein operates within secondary metabolite biosynthesis; flavonoid biosynthesis. In terms of biological role, plant type III polyketide synthases (PKSs) that catalyzes the condensation of malonyl-CoA units with various CoA ester starter molecules to generate a diverse array of natural products including long-chain alkyl alpha-pyrones. Accepts up to C(20) chain-length fatty acyl CoAs as starter substrates, and carries out sequential condensations with malonyl-CoA to produce triketide and tetraketide alpha-pyrones, potential sporopollenin precursors. Favorite substrates for are midchain- and v-hydroxylated fatty acyl-CoAs (e.g. 12-hydroxyoctadecanoyl-CoA and 16-hydroxyhexadecanoyl-CoA). Required for pollen development and sporopollenin biosynthesis, the major constituent of exine in the outer pollen wall. In vitro, can use 4-coumaroyl-coenzyme A as substrate to produce bis-noryangonin and fatty acyl-coenzyme A as substrate to produce medium-chain alkyl pyrones. May play a role in both the synthesis of pollen fatty acids and phenolics found in exine. This Arabidopsis thaliana (Mouse-ear cress) protein is Type III polyketide synthase A.